The chain runs to 800 residues: Phenylalanine--tRNA ligase beta subunit (800 aa).

In terms of domain architecture, tRNA-binding spans 39-154; sequence TKDIKNLVVG…ESQVPGTDAL (116 aa). In terms of domain architecture, B5 spans 408–483; it reads AFITPIDITA…RIYGYDDIPS (76 aa). Residues Asp461, Asp467, Glu470, and Glu471 each coordinate Mg(2+). The FDX-ACB domain maps to 708–800; it reads PRFPGMSRDI…ALIEQGAVIR (93 aa).

Belongs to the phenylalanyl-tRNA synthetase beta subunit family. Type 1 subfamily. As to quaternary structure, tetramer of two alpha and two beta subunits. Requires Mg(2+) as cofactor.

The protein resides in the cytoplasm. The catalysed reaction is tRNA(Phe) + L-phenylalanine + ATP = L-phenylalanyl-tRNA(Phe) + AMP + diphosphate + H(+). The sequence is that of Phenylalanine--tRNA ligase beta subunit from Staphylococcus aureus (strain MRSA252).